Consider the following 470-residue polypeptide: Membrane-bound lytic murein transglycosylase F (470 aa).

The signal sequence occupies residues 1–21 (MLKEKLIIIITLVMLLCACDI). A non-LT domain region spans residues 22-259 (QEQSTQLAQI…VLEEKYFGHV (238 aa)). Residues 260–470 (RQFNYVNTLA…PKIGDEVEAK (211 aa)) form an LT domain region. E304 is a catalytic residue.

It in the N-terminal section; belongs to the bacterial solute-binding protein 3 family. The protein in the C-terminal section; belongs to the transglycosylase Slt family.

The protein resides in the cell outer membrane. It catalyses the reaction Exolytic cleavage of the (1-&gt;4)-beta-glycosidic linkage between N-acetylmuramic acid (MurNAc) and N-acetylglucosamine (GlcNAc) residues in peptidoglycan, from either the reducing or the non-reducing ends of the peptidoglycan chains, with concomitant formation of a 1,6-anhydrobond in the MurNAc residue.. Murein-degrading enzyme that degrades murein glycan strands and insoluble, high-molecular weight murein sacculi, with the concomitant formation of a 1,6-anhydromuramoyl product. Lytic transglycosylases (LTs) play an integral role in the metabolism of the peptidoglycan (PG) sacculus. Their lytic action creates space within the PG sacculus to allow for its expansion as well as for the insertion of various structures such as secretion systems and flagella. The protein is Membrane-bound lytic murein transglycosylase F of Pseudoalteromonas translucida (strain TAC 125).